The chain runs to 334 residues: N-acetyl-gamma-glutamyl-phosphate reductase (334 aa).

C145 is an active-site residue. The tract at residues 173–192 (GISGSGQDPTEGTHYPNVTQ) is disordered.

It belongs to the NAGSA dehydrogenase family. Type 1 subfamily.

Its subcellular location is the cytoplasm. The catalysed reaction is N-acetyl-L-glutamate 5-semialdehyde + phosphate + NADP(+) = N-acetyl-L-glutamyl 5-phosphate + NADPH + H(+). The protein operates within amino-acid biosynthesis; L-arginine biosynthesis; N(2)-acetyl-L-ornithine from L-glutamate: step 3/4. In terms of biological role, catalyzes the NADPH-dependent reduction of N-acetyl-5-glutamyl phosphate to yield N-acetyl-L-glutamate 5-semialdehyde. The protein is N-acetyl-gamma-glutamyl-phosphate reductase of Methanocella arvoryzae (strain DSM 22066 / NBRC 105507 / MRE50).